A 94-amino-acid polypeptide reads, in one-letter code: DNA-directed RNA polymerase subunit omega (94 aa).

This sequence belongs to the RNA polymerase subunit omega family. In terms of assembly, consists of a sigma factor and the RNAP core enzyme which is composed of 2 alpha chains, 1 beta chain, 1 beta' chain and 1 subunit omega.

The catalysed reaction is RNA(n) + a ribonucleoside 5'-triphosphate = RNA(n+1) + diphosphate. Functionally, promotes RNA polymerase assembly. Latches the N- and C-terminal regions of the beta' subunit thereby facilitating its interaction with the beta and alpha subunits. This Shewanella violacea (strain JCM 10179 / CIP 106290 / LMG 19151 / DSS12) protein is DNA-directed RNA polymerase subunit omega.